Here is a 559-residue protein sequence, read N- to C-terminus: Protochlorophyllide-dependent translocon component 52, chloroplastic (559 aa).

A chloroplast-targeting transit peptide spans 1–55; it reads MEAALAACALPSLRILNTKPRFRCSFSNPSLPISPNSLITRKSSRFTTAVSSPPS. Residues 44–70 form a disordered region; the sequence is SRFTTAVSSPPSSSAATSTNSPPEPEA. Positions 47-64 are enriched in low complexity; sequence TTAVSSPPSSSAATSTNS. The Rieske domain maps to 85 to 195; it reads WYPVMPICDL…STVQHEIIWF (111 aa). 4 residues coordinate [2Fe-2S] cluster: C127, H129, C147, and H150. Positions 248 and 253 each coordinate Fe cation. The short motif at 483 to 486 is the Redox-active motif element; sequence CSSC. 2 consecutive transmembrane segments (helical) span residues 493–513 and 525–545; these read LNALEVILQIASVAMIGVMAV and IAVLVAAVLSFAASKWLSHFI.

The cofactor is [2Fe-2S] cluster.

It localises to the plastid. The protein localises to the chloroplast inner membrane. The catalysed reaction is protochlorophyllide a + 4 reduced [2Fe-2S]-[ferredoxin] + 2 O2 + 5 H(+) = protochlorophyllide b + 4 oxidized [2Fe-2S]-[ferredoxin] + 3 H2O. Its activity is regulated as follows. Down-regulated by light. Its function is as follows. Part of a translocon most abundantly expressed in etiolated plants and involved in the protochlorophyllide-dependent import of the precursor NADPH:protochlorophyllide oxidoreductase A (pPORA). The protein is Protochlorophyllide-dependent translocon component 52, chloroplastic of Arabidopsis thaliana (Mouse-ear cress).